The primary structure comprises 316 residues: tRNA dimethylallyltransferase (316 aa).

17-24 contacts ATP; the sequence is GPTASGKT. Substrate is bound at residue 19 to 24; it reads TASGKT. Interaction with substrate tRNA regions lie at residues 42-45, 166-170, 247-252, and 280-287; these read DSAL, QRLSR, RCVGYR, and KRQITWLR.

This sequence belongs to the IPP transferase family. As to quaternary structure, monomer. Mg(2+) serves as cofactor.

The enzyme catalyses adenosine(37) in tRNA + dimethylallyl diphosphate = N(6)-dimethylallyladenosine(37) in tRNA + diphosphate. Functionally, catalyzes the transfer of a dimethylallyl group onto the adenine at position 37 in tRNAs that read codons beginning with uridine, leading to the formation of N6-(dimethylallyl)adenosine (i(6)A). This Enterobacter sp. (strain 638) protein is tRNA dimethylallyltransferase.